Reading from the N-terminus, the 53-residue chain is Toxin CjTL7 (53 aa).

A signal peptide spans 1 to 22 (MMIKVLLLLSSALVLFTPEAEG). The residue at position 51 (tryptophan 51) is a Tryptophan amide.

Contains 4 disulfide bonds.

It is found in the secreted. The protein localises to the nematocyst. Functionally, in vivo, only causes a weak change in behavior in shrimps (C.multidentata) (slight twitching of the walking legs), but no lethal effect is observed. No activity is observed when injected into fly larvae (M.domestica). This Epiactis japonica (Sea anemone) protein is Toxin CjTL7.